Here is a 231-residue protein sequence, read N- to C-terminus: Putative cobalt transport protein CbiM 1 (231 aa).

6 consecutive transmembrane segments (helical) span residues 9 to 29 (PGPWWQIWWILSIPVFAYGIF), 41 to 61 (VLPLIAVSGAVIFVLSSLKLP), 74 to 94 (GMAVILFGPAITSVLSAIVLL), 107 to 127 (TFGANLMSMGIIGPFVAYAIY), 135 to 155 (VNFYVSAFVTATLADWVTYVV), and 181 to 201 (VFAITQIPLAILEASLITLLF).

This sequence belongs to the CbiM family. In terms of assembly, forms an energy-coupling factor (ECF) transporter complex composed of an ATP-binding protein (A component, CbiO), a transmembrane protein (T component, CbiQ) and 2 possible substrate-capture proteins (S components, CbiM and CbiN) of unknown stoichimetry.

The protein localises to the cell membrane. Its pathway is cofactor biosynthesis; adenosylcobalamin biosynthesis. In terms of biological role, part of the energy-coupling factor (ECF) transporter complex CbiMNOQ involved in cobalt import. The sequence is that of Putative cobalt transport protein CbiM 1 from Methanosarcina barkeri (strain Fusaro / DSM 804).